The sequence spans 90 residues: Bombyxin B-3 (90 aa).

Positions 1–20 (MMKTTIMFMLVVVISLTYSS) are cleaved as a signal peptide. Cystine bridges form between C30-C76, C42-C89, and C75-C80. Residues 49-67 (SGAQYAPYFWTRQYLGSRG) constitute a propeptide, c peptide like.

The protein belongs to the insulin family. As to quaternary structure, heterodimer of a B chain and an A chain linked by two disulfide bonds.

It is found in the secreted. Brain peptide responsible for activation of prothoracic glands to produce ecdysone in insects. The chain is Bombyxin B-3 (BBXB3) from Bombyx mori (Silk moth).